The chain runs to 739 residues: DEAD-box ATP-dependent RNA helicase 32 (739 aa).

The Q motif signature appears at Arg71–Ser99. The Helicase ATP-binding domain maps to Ile102 to Ile277. Ala115–Thr122 contributes to the ATP binding site. Positions Asp225–Asp228 match the DEAD box motif. One can recognise a Helicase C-terminal domain in the interval Lys303–Leu461. Positions Gly643–Asp689 form a coiled coil. Residues Val656–Ser725 form a disordered region. Over residues Arg661–Arg674 the composition is skewed to basic residues. A compositionally biased stretch (acidic residues) spans Glu678–His688.

The protein belongs to the DEAD box helicase family. DDX10/DBP4 subfamily.

It carries out the reaction ATP + H2O = ADP + phosphate + H(+). The protein is DEAD-box ATP-dependent RNA helicase 32 (RH32) of Arabidopsis thaliana (Mouse-ear cress).